The following is a 259-amino-acid chain: Small ribosomal subunit protein uS2 (259 aa).

The segment at 234–259 is disordered; the sequence is VAEDSEEVSTVDADAITAEDFETEEV. Acidic residues predominate over residues 250–259; it reads TAEDFETEEV.

Belongs to the universal ribosomal protein uS2 family.

This is Small ribosomal subunit protein uS2 from Sulfurimonas denitrificans (strain ATCC 33889 / DSM 1251) (Thiomicrospira denitrificans (strain ATCC 33889 / DSM 1251)).